The following is a 364-amino-acid chain: PHD finger protein 6 (364 aa).

At Ser2 the chain carries N-acetylserine. 2 short sequence motifs (nuclear localization signal) span residues 13 to 16 (RQRK) and 129 to 133 (RKHKK). The C2HC pre-PHD-type 1 zinc-finger motif lies at 14-52 (QRKCGFCKSNRDKECGQLLISENQKVAAHHKCMLFSSAL). The tract at residues 14–132 (QRKCGFCKSN…IYMVYCRKHK (119 aa)) is extended PHD1 domain (ePHD1). The PHD-type 1 zinc finger occupies 80 to 132 (LMCSLCHCPGATIGCDVKTCHRTYHYHCALHDKAQIREKPSQGIYMVYCRKHK). Phosphoserine is present on residues Ser138, Ser145, and Ser155. The segment at 139 to 211 (EADLEESFNE…RSSPNDTRPK (73 aa)) is disordered. The Nucleolar localization signal signature appears at 157–169 (KTKKKSRKGRPRK). Basic residues predominate over residues 157 to 171 (KTKKKSRKGRPRKTN). Lys173 is covalently cross-linked (Glycyl lysine isopeptide (Lys-Gly) (interchain with G-Cter in SUMO2)). 2 positions are modified to phosphoserine: Ser183 and Ser199. Residues 209–249 (RPKCGFCHVGEEENEARGKLHIFNAKKAAAHYKCMLFSSGT) form a C2HC pre-PHD-type 2 zinc finger. Positions 209–330 (RPKCGFCHVG…IYKLYCKNHS (122 aa)) are extended PHD2 domain (ePHD2). Lys227 participates in a covalent cross-link: Glycyl lysine isopeptide (Lys-Gly) (interchain with G-Cter in SUMO2). The PHD-type 2 zinc finger occupies 278–330 (MKCTLCSQPGATIGCEIKACVKTYHYHCGVQDKAKYIENMSRGIYKLYCKNHS). The tract at residues 330–364 (SGNDERDEEDEERESKSRGRVAIDQQLTQQQLNGN) is disordered. The segment covering 354–364 (QQLTQQQLNGN) has biased composition (polar residues). At Thr357 the chain carries Phosphothreonine.

In terms of assembly, interacts with UBTF. Interacts with the NuRD complex component RBBP4 (via the nucleolar localization motif), the interaction mediates transcriptional repression activity. As to expression, at 12.5 dpc it is highly expressed in the embryonic central nervous system and at lower levels in other tissues. Very low levels present throughout the adult brain.

It is found in the nucleus. It localises to the nucleolus. The protein resides in the chromosome. Its subcellular location is the centromere. The protein localises to the kinetochore. Its function is as follows. Transcriptional regulator that associates with ribosomal RNA promoters and suppresses ribosomal RNA (rRNA) transcription. The sequence is that of PHD finger protein 6 (Phf6) from Mus musculus (Mouse).